Reading from the N-terminus, the 154-residue chain is Keratin-associated protein 9-4 (154 aa).

15 repeat units span residues 8-12 (CCQPT), 13-17 (CCRTT), 18-22 (CCRTT), 37-41 (CCQPS), 42-46 (CCVSS), 51-55 (CCRPT), 56-60 (CCQNT), 61-65 (CCQPT), 70-74 (CCQPS), 75-79 (CCSTP), 80-84 (CCQPT), 85-89 (CCGSS), 129-133 (CCRPA), 134-138 (CCETT), and 148-152 (CCQPF). The 15 X 5 AA repeats of C-C-[RQVGE]-[SPTN]-[TASPF] stretch occupies residues 8–152 (CCQPTCCRTT…TCVSSCCQPF (145 aa)).

This sequence belongs to the KRTAP type 9 family. Interacts with hair keratins.

Its function is as follows. In the hair cortex, hair keratin intermediate filaments are embedded in an interfilamentous matrix, consisting of hair keratin-associated proteins (KRTAP), which are essential for the formation of a rigid and resistant hair shaft through their extensive disulfide bond cross-linking with abundant cysteine residues of hair keratins. The matrix proteins include the high-sulfur and high-glycine-tyrosine keratins. The polypeptide is Keratin-associated protein 9-4 (KRTAP9-4) (Homo sapiens (Human)).